A 281-amino-acid polypeptide reads, in one-letter code: NAC domain-containing protein 6 (281 aa).

In terms of domain architecture, NAC spans 4–156 (LPVGSRFCPT…QDALTGFADQ (153 aa)). Disordered stretches follow at residues 84–109 (GGSEGGTWRSNDGKKEIKDGHMQKGD) and 211–249 (LEGHEDREQPEEAELTVTQQQQQQQQQQQRQEDCDVTQE). The span at 94–109 (NDGKKEIKDGHMQKGD) shows a compositional bias: basic and acidic residues. The DNA-binding element occupies 109–162 (DGLRASDDLQKVVLCRIRYKKEANVNEFGLVNHQAHQTQDALTGFADQLEMMLE). Low complexity predominate over residues 229–239 (QQQQQQQQQQQ).

The protein localises to the nucleus. The protein is NAC domain-containing protein 6 (NAC006) of Arabidopsis thaliana (Mouse-ear cress).